The chain runs to 64 residues: Large ribosomal subunit protein bL32 (64 aa).

The protein belongs to the bacterial ribosomal protein bL32 family.

In Flavobacterium johnsoniae (strain ATCC 17061 / DSM 2064 / JCM 8514 / BCRC 14874 / CCUG 350202 / NBRC 14942 / NCIMB 11054 / UW101) (Cytophaga johnsonae), this protein is Large ribosomal subunit protein bL32.